Consider the following 220-residue polypeptide: Fructose-6-phosphate aldolase (220 aa).

Lys-85 (schiff-base intermediate with substrate) is an active-site residue.

This sequence belongs to the transaldolase family. Type 3A subfamily. Homodecamer.

It is found in the cytoplasm. It catalyses the reaction beta-D-fructose 6-phosphate = dihydroxyacetone + D-glyceraldehyde 3-phosphate. Catalyzes the reversible formation of fructose 6-phosphate from dihydroxyacetone and D-glyceraldehyde 3-phosphate via an aldolization reaction. The protein is Fructose-6-phosphate aldolase of Klebsiella pneumoniae subsp. pneumoniae (strain ATCC 700721 / MGH 78578).